The sequence spans 683 residues: Glucosylceramidase (683 aa).

Catalysis depends on glutamate 254, which acts as the Proton donor. Glutamate 483 serves as the catalytic Nucleophile.

The protein belongs to the glycosyl hydrolase 5 (cellulase A) family.

The protein resides in the membrane. The catalysed reaction is a beta-D-glucosyl-(1&lt;-&gt;1')-N-acylsphing-4-enine + H2O = an N-acylsphing-4-enine + D-glucose. Its activity is regulated as follows. Inhibited by metal cations Co(2+), Cu(2+), Ni(2+), Pb(2+) and Zn(2+). Not inhibited by metal chelator ethylenediaminetetraacetic acid (EDTA). Its function is as follows. Specifically hydrolyzes the glucosidic linkage in glucosylceramide. May prevent accumulation of aberrent glucosylceramide containing immature ceramide. In Rhizopus delemar (strain RA 99-880 / ATCC MYA-4621 / FGSC 9543 / NRRL 43880) (Mucormycosis agent), this protein is Glucosylceramidase.